Reading from the N-terminus, the 185-residue chain is Elongation factor P (185 aa).

It belongs to the elongation factor P family.

The protein resides in the cytoplasm. The protein operates within protein biosynthesis; polypeptide chain elongation. Involved in peptide bond synthesis. Stimulates efficient translation and peptide-bond synthesis on native or reconstituted 70S ribosomes in vitro. Probably functions indirectly by altering the affinity of the ribosome for aminoacyl-tRNA, thus increasing their reactivity as acceptors for peptidyl transferase. In Acetivibrio thermocellus (strain ATCC 27405 / DSM 1237 / JCM 9322 / NBRC 103400 / NCIMB 10682 / NRRL B-4536 / VPI 7372) (Clostridium thermocellum), this protein is Elongation factor P.